We begin with the raw amino-acid sequence, 337 residues long: Phenylpyruvate C(3)-methyltransferase (337 aa).

This sequence belongs to the methyltransferase superfamily.

The enzyme catalyses 3-phenylpyruvate + S-adenosyl-L-methionine = (3S)-2-oxo-3-phenylbutanoate + S-adenosyl-L-homocysteine + H(+). It functions in the pathway antibiotic biosynthesis. In terms of biological role, S-adenosyl-L-methionine-dependent methyltransferase involved in synthesis of the nonproteinogenic amino acid (2S,3S)-beta-methyl-phenylalanine, a building block of the antibiotic mannopeptimycin. The chain is Phenylpyruvate C(3)-methyltransferase (mppJ) from Streptomyces hygroscopicus.